A 556-amino-acid polypeptide reads, in one-letter code: Solute carrier family 22 member 1 (556 aa).

The Cytoplasmic segment spans residues 1–21 (MPTVDDVLEQVGEFGWFQKQA). The helical transmembrane segment at 22-42 (FLLLCLISASLAPIYVGIVFL) threads the bilayer. Topologically, residues 43–150 (GFTPGHYCQN…LVCGDAWKVD (108 aa)) are extracellular. Residue Asn-71 is glycosylated (N-linked (GlcNAc...) asparagine). Residues 151-171 (LFQSCVNLGFFLGSLVVGYIA) form a helical membrane-spanning segment. The Cytoplasmic portion of the chain corresponds to 172-177 (DRFGRK). A helical transmembrane segment spans residues 178–198 (LCLLVTTLVTSVSGVLTAVAP). Residues 199 to 211 (DYTSMLLFRLLQG) are Extracellular-facing. The helical transmembrane segment at 212 to 231 (MVSKGSWVSGYTLITEFVGS) threads the bilayer. Over 232–238 (GYRRTTA) the chain is Cytoplasmic. A helical membrane pass occupies residues 239–259 (ILYQMAFTVGLVGLAGVAYAI). The Extracellular segment spans residues 260 to 263 (PDWR). Residues 264–284 (WLQLAVSLPTFLFLLYYWFVP) form a helical membrane-spanning segment. The Proline-rich sequence motif lies at 284-288 (PESPR). Residues 285–348 (ESPRWLLSQK…FRTPNLRKHT (64 aa)) are Cytoplasmic-facing. The residue at position 334 (Ser-334) is a Phosphoserine. The chain crosses the membrane as a helical span at residues 349 to 369 (VILMYLWFSCAVLYQGLIMHV). Over 370–377 (GATGANLY) the chain is Extracellular. The chain crosses the membrane as a helical span at residues 378–398 (LDFFYSSLVEFPAAFIILVTI). The Cytoplasmic portion of the chain corresponds to 399–403 (DRIGR). Residues 404–424 (IYPIAASNLVTGAACLLMIFI) traverse the membrane as a helical segment. The Extracellular segment spans residues 425–429 (PHELH). The chain crosses the membrane as a helical span at residues 430 to 452 (WLNVTLACLGRMGATIVLQMVCL). Residues 453–465 (VNAELYPTFIRNL) lie on the Cytoplasmic side of the membrane. Residues 466–486 (GMMVCSALCDLGGIFTPFMVF) traverse the membrane as a helical segment. Residues 487–493 (RLMEVWQ) lie on the Extracellular side of the membrane. A helical transmembrane segment spans residues 494–514 (ALPLILFGVLGLTAGAMTLLL). The Cytoplasmic portion of the chain corresponds to 515-556 (PETKGVALPETIEEAENLGRRKSKAKENTIYLQVQTGKSSST). Phosphothreonine is present on Thr-543.

This sequence belongs to the major facilitator (TC 2.A.1) superfamily. Organic cation transporter (TC 2.A.1.19) family. Post-translationally, phosphorylated. In terms of tissue distribution, expressed in kidney cortex in S1, S2 segments of renal proximal tubules as well as in kidney medulla. Expressed throughout the liver lobuli, in hepatocytes surrounding the central veins. Expressed in enterocytes of villi and crypts in small intestine. Expressed in brain, in some white matter regions like the corpus callosum and in the granular layer of the cerebellum. Expressed in Sertoli cells in testis. Expressed in colon. Expressed in tracheal and bronchial ciliated epithelium in the respiratory tract. Expressed in spleen, moderately in skin, and weakly in the gastrointestinal tract, lung, thymus, muscle, and prostate. As to expression, expressed in kidney cortex and medulla. Expressed in intestine, liver and colon.

It localises to the basolateral cell membrane. The protein localises to the apical cell membrane. It is found in the lateral cell membrane. Its subcellular location is the basal cell membrane. The protein resides in the cell membrane. The catalysed reaction is 1-methylnicotinamide(out) = 1-methylnicotinamide(in). It carries out the reaction dopamine(out) = dopamine(in). It catalyses the reaction serotonin(out) = serotonin(in). The enzyme catalyses (R)-adrenaline(out) = (R)-adrenaline(in). The catalysed reaction is (R)-noradrenaline(out) = (R)-noradrenaline(in). It carries out the reaction histamine(out) = histamine(in). It catalyses the reaction guanidine(out) = guanidine(in). The enzyme catalyses choline(out) = choline(in). The catalysed reaction is acetylcholine(in) = acetylcholine(out). It carries out the reaction thiamine(in) = thiamine(out). It catalyses the reaction agmatine(out) = agmatine(in). The enzyme catalyses putrescine(out) = putrescine(in). The catalysed reaction is spermidine(in) = spermidine(out). It carries out the reaction (R)-carnitine(in) = (R)-carnitine(out). It catalyses the reaction O-isobutanoyl-(R)-carnitine(in) = O-isobutanoyl-(R)-carnitine(out). The enzyme catalyses O-acetyl-(R)-carnitine(in) = O-acetyl-(R)-carnitine(out). The catalysed reaction is O-3-hydroxybutanoyl-(R)-carnitine(in) = O-3-hydroxybutanoyl-(R)-carnitine(out). It carries out the reaction O-propanoyl-(R)-carnitine(in) = O-propanoyl-(R)-carnitine(out). It catalyses the reaction O-butanoyl-(R)-carnitine(in) = O-butanoyl-(R)-carnitine(out). The enzyme catalyses O-2-methylbutanoyl-(R)-carnitine(in) = O-2-methylbutanoyl-(R)-carnitine(out). The catalysed reaction is O-3-methylbutanoyl-(R)-carnitine(in) = O-3-methylbutanoyl-(R)-carnitine(out). It carries out the reaction O-hexanoyl-(R)-carnitine(in) = O-hexanoyl-(R)-carnitine(out). It catalyses the reaction L-histidyl-L-proline diketopiperazine(in) = L-histidyl-L-proline diketopiperazine(out). The enzyme catalyses (R)-salsolinol(in) = (R)-salsolinol(out). The catalysed reaction is prostaglandin F2alpha(out) = prostaglandin F2alpha(in). It carries out the reaction prostaglandin E2(out) = prostaglandin E2(in). With respect to regulation, phosphorylation of the transporter leads to changes in its substrate affinity, resulting in a regulation of the transport activity. In contrast with human ortholog, ASP uptake is stimulated by protein kinase A (PKA) and C (PKC) and endogenous tyrosine kinase activation. ASP affinity is induced by PKC-dependent phosphorylation. Inhibited by cGMP, most likely through a cGMP-binding protein that interacts with OCT1. Its function is as follows. Electrogenic voltage-dependent transporter that mediates the transport of a variety of organic cations such as endogenous bioactive amines, cationic drugs and xenobiotics. Functions as a pH- and Na(+)-independent, bidirectional transporter. Cation cellular uptake or release is driven by the electrochemical potential (i.e. membrane potential and concentration gradient) and substrate selectivity. Hydrophobicity is a major requirement for recognition in polyvalent substrates and inhibitors. Primarily expressed in the basolateral membrane of hepatocytes and proximal tubules and involved in the uptake and disposition of cationic compounds from the blood by hepatic and renal clearance. Most likely functions as an uptake carrier in enterocytes contributing to the intestinal excretion and elimination of organic cations from the systemic circulation. Transports endogenous monoamines such as N-1-methylnicotinamide (NMN), guanidine, neurotransmitters dopamine, serotonin, noradrenaline, adrenaline and histamine, and quaternary ammonium compound such as choline. Also transports natural polyamines such as spermidine, agmatine and putrescine at low affinity, but relatively high turnover. Involved in the hepatic uptake of vitamin B1/thiamine, hence regulating hepatic lipid and energy metabolism. Contributes to the influx and efflux of fatty acid carriers carnitines and acylcarnitines across the basolateral membrane of hepatocytes, from the liver to the systemic circulation and inversely and may be involved in regulating the systemic availability of hepatic acylcarnitines. Mediates the bidirectional transport of acetylcholine (ACh) at the apical membrane of ciliated cell in airway epithelium, thereby playing a role in luminal release of ACh from bronchial epithelium. Transports dopaminergic neuromodulators cyclo(his-pro) and salsolinol with lower efficency. Also capable of transporting non-amine endogenous compounds such as prostaglandin E2 (PGE2) and prostaglandin F2-alpha (PGF2-alpha). May contribute to the transport of cationic compounds in testis across the blood-testis-barrier. Also mediates the uptake of xenobiotics tributylmethylammonium (TBuMA), quinidine, N-methyl-quinine (NMQ), N-methyl-quinidine (NMQD) N-(4,4-azo-n-pentyl)-quinuclidine (APQ), azidoprocainamide methoiodide (AMP), N-(4,4-azo-n-pentyl)-21-deoxyajmalinium (APDA) and 4-(4-(dimethylamino)styryl)-N-methylpyridinium (ASP). Functionally, functional isoform capable of transporting TEA. The sequence is that of Solute carrier family 22 member 1 from Rattus norvegicus (Rat).